Consider the following 556-residue polypeptide: 2-succinyl-5-enolpyruvyl-6-hydroxy-3-cyclohexene-1-carboxylate synthase (556 aa).

This sequence belongs to the TPP enzyme family. MenD subfamily. In terms of assembly, homodimer. The cofactor is Mg(2+). Requires Mn(2+) as cofactor. Thiamine diphosphate serves as cofactor.

It catalyses the reaction isochorismate + 2-oxoglutarate + H(+) = 5-enolpyruvoyl-6-hydroxy-2-succinyl-cyclohex-3-ene-1-carboxylate + CO2. The protein operates within quinol/quinone metabolism; 1,4-dihydroxy-2-naphthoate biosynthesis; 1,4-dihydroxy-2-naphthoate from chorismate: step 2/7. Its pathway is quinol/quinone metabolism; menaquinone biosynthesis. Catalyzes the thiamine diphosphate-dependent decarboxylation of 2-oxoglutarate and the subsequent addition of the resulting succinic semialdehyde-thiamine pyrophosphate anion to isochorismate to yield 2-succinyl-5-enolpyruvyl-6-hydroxy-3-cyclohexene-1-carboxylate (SEPHCHC). This is 2-succinyl-5-enolpyruvyl-6-hydroxy-3-cyclohexene-1-carboxylate synthase from Escherichia coli (strain ATCC 8739 / DSM 1576 / NBRC 3972 / NCIMB 8545 / WDCM 00012 / Crooks).